The sequence spans 356 residues: tRNA N6-adenosine threonylcarbamoyltransferase (356 aa).

The Fe cation site is built by His-115 and His-119. Substrate contacts are provided by residues 138–142 (LVSGG), Asp-171, Gly-184, and Asn-283. A Fe cation-binding site is contributed by Asp-311.

The protein belongs to the KAE1 / TsaD family. Fe(2+) is required as a cofactor.

It localises to the cytoplasm. The enzyme catalyses L-threonylcarbamoyladenylate + adenosine(37) in tRNA = N(6)-L-threonylcarbamoyladenosine(37) in tRNA + AMP + H(+). Required for the formation of a threonylcarbamoyl group on adenosine at position 37 (t(6)A37) in tRNAs that read codons beginning with adenine. Is involved in the transfer of the threonylcarbamoyl moiety of threonylcarbamoyl-AMP (TC-AMP) to the N6 group of A37, together with TsaE and TsaB. TsaD likely plays a direct catalytic role in this reaction. The polypeptide is tRNA N6-adenosine threonylcarbamoyltransferase (Prochlorococcus marinus (strain MIT 9515)).